Consider the following 172-residue polypeptide: C-phycocyanin beta chain (172 aa).

(2R,3E)-phycocyanobilin-binding positions include asparagine 35, aspartate 39, asparagine 72, arginine 77, cysteine 82, 82-88, 149-151, and cysteine 153; these read CLRDMEI and TIG. Asparagine 72 carries the N4-methylasparagine modification.

The protein belongs to the phycobiliprotein family. In terms of assembly, heterodimer of an alpha and a beta subunit, which further assembles into trimers and the trimers into hexamers. The basic functional unit of phycobiliproteins is a ring-shaped hexamer formed from two back-to-back trimers contacting via the alpha chain subunits. The trimers are composed of alpha/beta subunit heterodimers arranged around a three-fold axis of symmetry. The phycoerythrins also contain a gamma subunit which is located in the center of the hexamer. Post-translationally, contains two covalently linked phycocyanobilin chromophores.

Its subcellular location is the plastid. The protein localises to the chloroplast thylakoid membrane. Its function is as follows. Light-harvesting photosynthetic tetrapyrrole chromophore-protein from the phycobiliprotein complex (phycobilisome, PBS). Phycocyanin is the major phycobiliprotein in the PBS rod. This chain is C-phycocyanin beta chain (cpcB), found in Cyanidium caldarium (Red alga).